We begin with the raw amino-acid sequence, 428 residues long: uncharacterized protein (428 aa).

Positions 72–91 (SQGSPVAPSPNHRSTMYSSS) are disordered. S127 is modified (phosphoserine).

This is an uncharacterized protein from Saccharomyces cerevisiae (strain ATCC 204508 / S288c) (Baker's yeast).